Consider the following 238-residue polypeptide: Insulin-like growth factor-binding protein 6 (238 aa).

The N-terminal stretch at 1–25 (MTWDGLPTQPLLMLLMLLFAAGSGS) is a signal peptide. The region spanning 26–108 (ALAGCPGCGA…LIGQGRCQRA (83 aa)) is the IGFBP N-terminal domain. 5 disulfides stabilise this stretch: cysteine 30–cysteine 33, cysteine 41–cysteine 45, cysteine 58–cysteine 64, cysteine 72–cysteine 85, and cysteine 79–cysteine 105. Residues 104-159 (RCQRARGPSEETTKESKPQGGASRSRDTNHRDRQKNPRTSAAPIRPNPVQDSEMGP) are disordered. Composition is skewed to basic and acidic residues over residues 110–120 (GPSEETTKESK) and 127–138 (RSRDTNHRDRQK). In terms of domain architecture, Thyroglobulin type-1 spans 157–232 (MGPCRRHLDS…SPDGQGSTQC (76 aa)). 3 cysteine pairs are disulfide-bonded: cysteine 160-cysteine 188, cysteine 199-cysteine 210, and cysteine 212-cysteine 232. A disordered region spans residues 218–238 (QPLPVSPDGQGSTQCSARSSG). Polar residues predominate over residues 226–238 (GQGSTQCSARSSG).

Interacts (via C-terminal domain) with PHB2. O-glycosylated.

The protein resides in the secreted. IGF-binding proteins prolong the half-life of the IGFs and have been shown to either inhibit or stimulate the growth promoting effects of the IGFs on cell culture. They alter the interaction of IGFs with their cell surface receptors. Activates the MAPK signaling pathway and induces cell migration. This Mus musculus (Mouse) protein is Insulin-like growth factor-binding protein 6 (Igfbp6).